Here is a 433-residue protein sequence, read N- to C-terminus: GTPase Der (433 aa).

2 consecutive EngA-type G domains span residues 5–167 and 174–349; these read KKVL…GEVG and IKVG…DQLE. GTP is bound by residues 11-18, 58-62, 119-122, 180-187, 227-231, and 292-295; these read GRPNVGKS, DTGGF, NKVD, GKPNSGKS, DTAGI, and SKWD. One can recognise a KH-like domain in the interval 349-429; sequence ELKTSTPDLN…PILVELKEKI (81 aa).

The protein belongs to the TRAFAC class TrmE-Era-EngA-EngB-Septin-like GTPase superfamily. EngA (Der) GTPase family. As to quaternary structure, associates with the 50S ribosomal subunit.

GTPase that plays an essential role in the late steps of ribosome biogenesis. The sequence is that of GTPase Der from Borreliella burgdorferi (strain ATCC 35210 / DSM 4680 / CIP 102532 / B31) (Borrelia burgdorferi).